A 460-amino-acid chain; its full sequence is Ammonium transporter Rh type C (460 aa).

The Cytoplasmic portion of the chain corresponds to 1–9; that stretch reads MVWNTNLRW. A helical membrane pass occupies residues 10 to 30; sequence RLPVTCLLLQVALVVLFGVFV. Residues 31–61 are Extracellular-facing; that stretch reads RYDMDADPHWIDKKEAENSTSDMENEFYYRY. N-linked (GlcNAc...) asparagine glycosylation occurs at asparagine 48. A helical transmembrane segment spans residues 62 to 82; it reads PSFQDVHVMIFVGFGFLMTFL. Topologically, residues 83-90 are cytoplasmic; sequence QRYGYSSV. Residues 91–111 form a helical membrane-spanning segment; sequence GFNFLLAAFGIQWALLLQGWF. Over 112 to 125 the chain is Extracellular; it reads HSYYRGYIRVGVEN. Residues 126–145 form a helical membrane-spanning segment; the sequence is LINADFCVGSVCVAFGAVLG. Residues 146-151 are Cytoplasmic-facing; it reads KVSPVQ. Residues 152 to 174 form a helical membrane-spanning segment; sequence LLIMTLFQVTLFSVNEFILLNLL. At 175–179 the chain is on the extracellular side; the sequence is EVKDA. Residues 180 to 200 form a helical membrane-spanning segment; sequence GGSMTIHTFGAYFGLTVTWIL. Over 201-219 the chain is Cytoplasmic; it reads YRPGLHQSKERQSSVYHSD. Residues 220 to 240 traverse the membrane as a helical segment; the sequence is LFAMIGTLFLWMYWPSFNSAV. Over 241–251 the chain is Extracellular; the sequence is SNHGDAQHRAA. Residues 252–272 traverse the membrane as a helical segment; that stretch reads INTYCSLAACVLTSVALSSAL. The Cytoplasmic portion of the chain corresponds to 273–285; it reads HKKGKLDMVHIQN. Residues 286–306 traverse the membrane as a helical segment; that stretch reads ATLAGGVAVGTAAEMMLMPYG. Position 307 (serine 307) is a topological domain, extracellular. Residues 308–328 form a helical membrane-spanning segment; the sequence is LIVGFICGIVSTLGFVYLTPF. Residues 329-339 lie on the Cytoplasmic side of the membrane; it reads LESRLRVQDTC. A helical membrane pass occupies residues 340–360; that stretch reads GIHNLHGIPGIIGAIVGAVTA. Residues 361-396 are Extracellular-facing; it reads SCANTDVYGVNGLTQAFGFDGFKTNRTPSMQGKFQA. Residues 397-417 form a helical membrane-spanning segment; it reads AGLFVSLAMALVGGIIVGIIL. The Cytoplasmic segment spans residues 418–460; the sequence is KLPFWGQPADENCFEDAIYWEMPEEPKSTVLHPEDSTLKPSEP.

This sequence belongs to the ammonium transporter (TC 2.A.49) family. Rh subfamily. As to quaternary structure, homotrimer. Post-translationally, N-glycosylated.

The protein resides in the apical cell membrane. It carries out the reaction NH4(+)(in) = NH4(+)(out). The catalysed reaction is methylamine(out) = methylamine(in). It catalyses the reaction CO2(out) = CO2(in). Its function is as follows. Ammonium transporter involved in the maintenance of acid-base homeostasis. Transports ammonium and its related derivative methylammonium across the plasma membrane of epithelial cells likely contributing to renal transepithelial ammonia transport and ammonia metabolism. Postulated to primarily mediate an electroneutral bidirectional transport of NH3 ammonia species according to a mechanism that implies interaction of an NH4(+) ion with acidic residues of the pore entry followed by dissociation of NH4(+) into NH3 and H(+). As a result NH3 transits through the central pore and is protonated on the extracellular side reforming NH4(+). May act as a CO2 channel providing for renal acid secretion. The chain is Ammonium transporter Rh type C (RHCG) from Canis lupus familiaris (Dog).